The following is a 443-amino-acid chain: Ribosomal protein uS12 methylthiotransferase RimO (443 aa).

The region spanning 10 to 120 is the MTTase N-terminal domain; it reads PRVGFVSLGC…VMQAVHRHLP (111 aa). [4Fe-4S] cluster-binding residues include C19, C55, C84, C151, C155, and C158. Residues 137–375 enclose the Radical SAM core domain; it reads LTPQHYAYLK…DFQEDISTQR (239 aa). Residues 377–443 enclose the TRAM domain; that stretch reads EAKIGREMTV…IHDLYAERVV (67 aa).

It belongs to the methylthiotransferase family. RimO subfamily. Requires [4Fe-4S] cluster as cofactor.

It is found in the cytoplasm. The enzyme catalyses L-aspartate(89)-[ribosomal protein uS12]-hydrogen + (sulfur carrier)-SH + AH2 + 2 S-adenosyl-L-methionine = 3-methylsulfanyl-L-aspartate(89)-[ribosomal protein uS12]-hydrogen + (sulfur carrier)-H + 5'-deoxyadenosine + L-methionine + A + S-adenosyl-L-homocysteine + 2 H(+). Functionally, catalyzes the methylthiolation of an aspartic acid residue of ribosomal protein uS12. In Azoarcus sp. (strain BH72), this protein is Ribosomal protein uS12 methylthiotransferase RimO.